The following is a 1191-amino-acid chain: Laminin subunit gamma-2 (1191 aa).

Positions 1–21 (MPALWLSCCLGVALLLPAAQA) are cleaved as a signal peptide. 12 disulfide bridges follow: cysteine 28–cysteine 37, cysteine 30–cysteine 53, cysteine 56–cysteine 65, cysteine 68–cysteine 81, cysteine 84–cysteine 96, cysteine 86–cysteine 102, cysteine 104–cysteine 113, cysteine 116–cysteine 128, cysteine 139–cysteine 150, cysteine 141–cysteine 155, cysteine 157–cysteine 166, and cysteine 169–cysteine 184. Laminin EGF-like domains lie at 28–83 (CDCN…RCLP), 84–130 (CNCH…GCTR), and 139–186 (CDCD…GCTQ). The 10-residue stretch at 187-196 (CFCYGHSASC) folds into the Laminin EGF-like 4; first part domain. A Laminin IV type A domain is found at 213–381 (QDVDGWKAVQ…SGAPAPWVER (169 aa)). 2 N-linked (GlcNAc...) asparagine glycosylation sites follow: asparagine 342 and asparagine 362. One can recognise a Laminin EGF-like 4; second part domain in the interval 382-415 (CVCPAGYKGQFCQECASGYKRDSARLGPFGACVP). 3 Laminin EGF-like domains span residues 416–461 (CNCQ…SCKP), 462–516 (CPCH…PCQR), and 517–572 (CQCN…KCRA). 11 cysteine pairs are disulfide-bonded: cysteine 462–cysteine 470, cysteine 464–cysteine 481, cysteine 484–cysteine 493, cysteine 496–cysteine 514, cysteine 517–cysteine 531, cysteine 519–cysteine 538, cysteine 541–cysteine 550, cysteine 553–cysteine 570, cysteine 573–cysteine 585, cysteine 575–cysteine 591, and cysteine 593–cysteine 602. Asparagine 526 carries an N-linked (GlcNAc...) asparagine glycan. Positions 573-602 (CNCSPMGSEPGECRGDGSCVCKPGFGGLNC) constitute a Laminin EGF-like 8; truncated domain. The Cell attachment site motif lies at 586–588 (RGD). A domain II and I region spans residues 603–1191 (DHAALTSCPA…CYNTQALEQQ (589 aa)). 2 coiled-coil regions span residues 612–710 (ACYN…IRAL) and 759–786 (LAQE…ETED). Residue serine 805 is glycosylated (O-linked (Xyl...) (chondroitin sulfate) serine). Asparagine 941 is a glycosylation site (N-linked (GlcNAc...) asparagine). A coiled-coil region spans residues 946–996 (EVENILKNLREFDLQVEDRKAEAEEAMKRLSSISQKVADASDKTQQAETAL). A glycan (N-linked (GlcNAc...) asparagine) is linked at asparagine 1032. Positions 1139 to 1178 (LMSDLEERVRRQRNHLHLLETSIDGILADVKNLENIRDNL) form a coiled coil.

As to quaternary structure, laminin is a complex glycoprotein, consisting of three different polypeptide chains (alpha, beta, gamma), which are bound to each other by disulfide bonds into a cross-shaped molecule comprising one long and three short arms with globules at each end. Gamma-2 is a subunit of laminin-5 (laminin-332 or epiligrin/kalinin/nicein). Binds to fibulin-1, fibulin-1c, fibulin-2 and nidogen. In terms of processing, O-glycosylated; contains chondroitin sulfate (CS). Epithelial cells of many tissues, particularly high levels in tongue, hair follicles and kidney. Basement membranes of the collecting tubules of kidney and pancreas.

Its subcellular location is the secreted. The protein resides in the extracellular space. It localises to the extracellular matrix. The protein localises to the basement membrane. Binding to cells via a high affinity receptor, laminin is thought to mediate the attachment, migration and organization of cells into tissues during embryonic development by interacting with other extracellular matrix components. This chain is Laminin subunit gamma-2 (Lamc2), found in Mus musculus (Mouse).